Reading from the N-terminus, the 207-residue chain is GTP cyclohydrolase-2 (207 aa).

49–53 (RTHSE) contacts GTP. Residues cysteine 54, cysteine 65, and cysteine 67 each coordinate Zn(2+). GTP is bound by residues glutamine 70, 92 to 94 (EGR), and threonine 114. Aspartate 126 acts as the Proton acceptor in catalysis. Arginine 128 acts as the Nucleophile in catalysis. GTP is bound by residues threonine 149 and lysine 154.

It belongs to the GTP cyclohydrolase II family. Zn(2+) is required as a cofactor.

The catalysed reaction is GTP + 4 H2O = 2,5-diamino-6-hydroxy-4-(5-phosphoribosylamino)-pyrimidine + formate + 2 phosphate + 3 H(+). The protein operates within cofactor biosynthesis; riboflavin biosynthesis; 5-amino-6-(D-ribitylamino)uracil from GTP: step 1/4. In terms of biological role, catalyzes the conversion of GTP to 2,5-diamino-6-ribosylamino-4(3H)-pyrimidinone 5'-phosphate (DARP), formate and pyrophosphate. The polypeptide is GTP cyclohydrolase-2 (Hahella chejuensis (strain KCTC 2396)).